The following is an 84-amino-acid chain: Anthracycline acyl carrier protein DpsG (84 aa).

In terms of domain architecture, Carrier spans 3-80 (ELSLAELREI…SMLIFVNERL (78 aa)). S40 carries the post-translational modification O-(pantetheine 4'-phosphoryl)serine.

The protein operates within antibiotic biosynthesis; daunorubicin biosynthesis. It functions in the pathway antibiotic biosynthesis; carminomycin biosynthesis. Its pathway is antibiotic biosynthesis; rhodomycin biosynthesis. It participates in antibiotic biosynthesis; aclacinomycin biosynthesis. Involved in the biosynthesis of aklanonate which is an important precursor common to the formation of the clinically significant anthracyclines such as carminomycin, daunorubicin (daunomycin), rhodomycin, aclacinomycin T (aklavin) and aclacinomycin A (aclarubicin). These compounds are aromatic polyketide antibiotics that exhibit high cytotoxicity and are widely applied in the chemotherapy of a variety of cancers. The chain is Anthracycline acyl carrier protein DpsG (dpsG) from Streptomyces peucetius.